We begin with the raw amino-acid sequence, 370 residues long: Queuine tRNA-ribosyltransferase (370 aa).

The active-site Proton acceptor is the Asp89. Substrate-binding positions include 89–93 (DSGGF), Asp143, Gln187, and Gly214. The segment at 245–251 (GVGTPED) is RNA binding. Asp264 functions as the Nucleophile in the catalytic mechanism. Residues 269–273 (TRNAR) form an RNA binding; important for wobble base 34 recognition region. Positions 302, 304, 307, and 333 each coordinate Zn(2+).

It belongs to the queuine tRNA-ribosyltransferase family. Homodimer. Within each dimer, one monomer is responsible for RNA recognition and catalysis, while the other monomer binds to the replacement base PreQ1. The cofactor is Zn(2+).

The catalysed reaction is 7-aminomethyl-7-carbaguanine + guanosine(34) in tRNA = 7-aminomethyl-7-carbaguanosine(34) in tRNA + guanine. It participates in tRNA modification; tRNA-queuosine biosynthesis. Catalyzes the base-exchange of a guanine (G) residue with the queuine precursor 7-aminomethyl-7-deazaguanine (PreQ1) at position 34 (anticodon wobble position) in tRNAs with GU(N) anticodons (tRNA-Asp, -Asn, -His and -Tyr). Catalysis occurs through a double-displacement mechanism. The nucleophile active site attacks the C1' of nucleotide 34 to detach the guanine base from the RNA, forming a covalent enzyme-RNA intermediate. The proton acceptor active site deprotonates the incoming PreQ1, allowing a nucleophilic attack on the C1' of the ribose to form the product. After dissociation, two additional enzymatic reactions on the tRNA convert PreQ1 to queuine (Q), resulting in the hypermodified nucleoside queuosine (7-(((4,5-cis-dihydroxy-2-cyclopenten-1-yl)amino)methyl)-7-deazaguanosine). The sequence is that of Queuine tRNA-ribosyltransferase from Aromatoleum aromaticum (strain DSM 19018 / LMG 30748 / EbN1) (Azoarcus sp. (strain EbN1)).